A 221-amino-acid polypeptide reads, in one-letter code: Protein-L-isoaspartate O-methyltransferase (221 aa).

Ser-60 is a catalytic residue.

Belongs to the methyltransferase superfamily. L-isoaspartyl/D-aspartyl protein methyltransferase family.

The protein localises to the cytoplasm. The enzyme catalyses [protein]-L-isoaspartate + S-adenosyl-L-methionine = [protein]-L-isoaspartate alpha-methyl ester + S-adenosyl-L-homocysteine. Its function is as follows. Catalyzes the methyl esterification of L-isoaspartyl residues in peptides and proteins that result from spontaneous decomposition of normal L-aspartyl and L-asparaginyl residues. It plays a role in the repair and/or degradation of damaged proteins. The chain is Protein-L-isoaspartate O-methyltransferase from Rhodospirillum centenum (strain ATCC 51521 / SW).